The following is a 158-amino-acid chain: 6,7-dimethyl-8-ribityllumazine synthase (158 aa).

5-amino-6-(D-ribitylamino)uracil is bound by residues Phe23, 61–63 (SFE), and 85–87 (AVI). 90 to 91 (ET) contacts (2S)-2-hydroxy-3-oxobutyl phosphate. His93 functions as the Proton donor in the catalytic mechanism. Phe118 provides a ligand contact to 5-amino-6-(D-ribitylamino)uracil. (2S)-2-hydroxy-3-oxobutyl phosphate is bound at residue Arg132.

It belongs to the DMRL synthase family.

It carries out the reaction (2S)-2-hydroxy-3-oxobutyl phosphate + 5-amino-6-(D-ribitylamino)uracil = 6,7-dimethyl-8-(1-D-ribityl)lumazine + phosphate + 2 H2O + H(+). Its pathway is cofactor biosynthesis; riboflavin biosynthesis; riboflavin from 2-hydroxy-3-oxobutyl phosphate and 5-amino-6-(D-ribitylamino)uracil: step 1/2. Functionally, catalyzes the formation of 6,7-dimethyl-8-ribityllumazine by condensation of 5-amino-6-(D-ribitylamino)uracil with 3,4-dihydroxy-2-butanone 4-phosphate. This is the penultimate step in the biosynthesis of riboflavin. The polypeptide is 6,7-dimethyl-8-ribityllumazine synthase (Prochlorococcus marinus (strain MIT 9515)).